The sequence spans 146 residues: Phospholipase A2 PS22 (146 aa).

The first 19 residues, 1-19, serve as a signal peptide directing secretion; it reads MYPAHLLVLLAVCVSLLGA. Positions 20 to 27 are excised as a propeptide; sequence ASVPPQPL. Cystine bridges form between Cys38/Cys98, Cys54/Cys145, Cys56/Cys72, Cys71/Cys126, Cys78/Cys119, Cys87/Cys112, and Cys105/Cys117. The Ca(2+) site is built by Tyr55, Gly57, and Gly59. His75 is a catalytic residue. A Ca(2+)-binding site is contributed by Asp76. Residue Asp120 is part of the active site.

The protein belongs to the phospholipase A2 family. Group I subfamily. D49 sub-subfamily. Requires Ca(2+) as cofactor. As to expression, expressed by the venom gland.

The protein localises to the secreted. It carries out the reaction a 1,2-diacyl-sn-glycero-3-phosphocholine + H2O = a 1-acyl-sn-glycero-3-phosphocholine + a fatty acid + H(+). Functionally, snake venom phospholipase A2 (PLA2) that inhibits collagen-induced platelet aggregation. PLA2 catalyzes the calcium-dependent hydrolysis of the 2-acyl groups in 3-sn-phosphoglycerides. This is Phospholipase A2 PS22 from Drysdalia coronoides (White-lipped snake).